Reading from the N-terminus, the 245-residue chain is DNA polymerase sliding clamp (245 aa).

Belongs to the PCNA family. In terms of assembly, homotrimer. The subunits circularize to form a toroid; DNA passes through its center. Replication factor C (RFC) is required to load the toroid on the DNA.

Its function is as follows. Sliding clamp subunit that acts as a moving platform for DNA processing. Responsible for tethering the catalytic subunit of DNA polymerase and other proteins to DNA during high-speed replication. The polypeptide is DNA polymerase sliding clamp (Methanosarcina acetivorans (strain ATCC 35395 / DSM 2834 / JCM 12185 / C2A)).